Consider the following 178-residue polypeptide: Interleukin-10 (178 aa).

An N-terminal signal peptide occupies residues methionine 1–alanine 18. Intrachain disulfides connect cysteine 30/cysteine 126 and cysteine 80/cysteine 132. An N-linked (GlcNAc...) asparagine glycan is attached at asparagine 134.

Belongs to the IL-10 family. As to quaternary structure, homodimer. Interacts with IL10RA and IL10RB.

The protein localises to the secreted. In terms of biological role, major immune regulatory cytokine that acts on many cells of the immune system where it has profound anti-inflammatory functions, limiting excessive tissue disruption caused by inflammation. Mechanistically, IL10 binds to its heterotetrameric receptor comprising IL10RA and IL10RB leading to JAK1 and STAT2-mediated phosphorylation of STAT3. In turn, STAT3 translocates to the nucleus where it drives expression of anti-inflammatory mediators. Targets antigen-presenting cells (APCs) such as macrophages and monocytes and inhibits their release of pro-inflammatory cytokines including granulocyte-macrophage colony-stimulating factor /GM-CSF, granulocyte colony-stimulating factor/G-CSF, IL-1 alpha, IL-1 beta, IL-6, IL-8 and TNF-alpha. Also interferes with antigen presentation by reducing the expression of MHC-class II and co-stimulatory molecules, thereby inhibiting their ability to induce T cell activation. In addition, controls the inflammatory response of macrophages by reprogramming essential metabolic pathways including mTOR signaling. The chain is Interleukin-10 (IL10) from Bos taurus (Bovine).